Reading from the N-terminus, the 469-residue chain is Aspartyl/glutamyl-tRNA(Asn/Gln) amidotransferase subunit B (469 aa).

This sequence belongs to the GatB/GatE family. GatB subfamily. Heterotrimer of A, B and C subunits.

It carries out the reaction L-glutamyl-tRNA(Gln) + L-glutamine + ATP + H2O = L-glutaminyl-tRNA(Gln) + L-glutamate + ADP + phosphate + H(+). The enzyme catalyses L-aspartyl-tRNA(Asn) + L-glutamine + ATP + H2O = L-asparaginyl-tRNA(Asn) + L-glutamate + ADP + phosphate + 2 H(+). In terms of biological role, allows the formation of correctly charged Asn-tRNA(Asn) or Gln-tRNA(Gln) through the transamidation of misacylated Asp-tRNA(Asn) or Glu-tRNA(Gln) in organisms which lack either or both of asparaginyl-tRNA or glutaminyl-tRNA synthetases. The reaction takes place in the presence of glutamine and ATP through an activated phospho-Asp-tRNA(Asn) or phospho-Glu-tRNA(Gln). This is Aspartyl/glutamyl-tRNA(Asn/Gln) amidotransferase subunit B from Methanococcus maripaludis (strain C6 / ATCC BAA-1332).